Consider the following 457-residue polypeptide: Multidrug resistance protein MdtK (457 aa).

12 helical membrane passes run 11-31 (LLAL…MGFV), 53-73 (IWLP…PVIA), 93-113 (WLAG…GYII), 127-147 (AVGY…FQVA), 160-180 (GMVM…IFIY), 189-209 (GGVG…FSMI), 243-263 (LPIA…ALLV), 276-296 (IALN…AAVT), 314-334 (AART…LFTV), 357-377 (LMLL…GSGI), 387-407 (IFFI…YILA), and 418-438 (PAGF…LMML).

It belongs to the multi antimicrobial extrusion (MATE) (TC 2.A.66.1) family. MdtK subfamily.

The protein resides in the cell inner membrane. Multidrug efflux pump that functions probably as a Na(+)/drug antiporter. The polypeptide is Multidrug resistance protein MdtK (Enterobacter sp. (strain 638)).